The primary structure comprises 432 residues: Phosphomethylpyrimidine synthase (432 aa).

Substrate contacts are provided by residues Asn-69, Met-98, Tyr-127, His-163, Ser-185–Gly-187, Asp-226–Arg-229, and Glu-265. His-269 provides a ligand contact to Zn(2+). Position 292 (Tyr-292) interacts with substrate. His-333 contacts Zn(2+). [4Fe-4S] cluster is bound by residues Cys-409, Cys-412, and Cys-416.

Belongs to the ThiC family. The cofactor is [4Fe-4S] cluster.

It catalyses the reaction 5-amino-1-(5-phospho-beta-D-ribosyl)imidazole + S-adenosyl-L-methionine = 4-amino-2-methyl-5-(phosphooxymethyl)pyrimidine + CO + 5'-deoxyadenosine + formate + L-methionine + 3 H(+). The protein operates within cofactor biosynthesis; thiamine diphosphate biosynthesis. Its function is as follows. Catalyzes the synthesis of the hydroxymethylpyrimidine phosphate (HMP-P) moiety of thiamine from aminoimidazole ribotide (AIR) in a radical S-adenosyl-L-methionine (SAM)-dependent reaction. In Pelotomaculum thermopropionicum (strain DSM 13744 / JCM 10971 / SI), this protein is Phosphomethylpyrimidine synthase.